The chain runs to 339 residues: Ketol-acid reductoisomerase (NADP(+)) (339 aa).

One can recognise a KARI N-terminal Rossmann domain in the interval 1–182 (MKIYYEKDAD…GNTRAGVIET (182 aa)). NADP(+) is bound by residues 24–27 (YGSQ), S51, S53, and 83–86 (DEKQ). H108 is a catalytic residue. G134 is an NADP(+) binding site. The KARI C-terminal knotted domain maps to 183–328 (SFREETETDL…EKLRGMMHWA (146 aa)). D191, E195, E227, and E231 together coordinate Mg(2+). S252 serves as a coordination point for substrate.

It belongs to the ketol-acid reductoisomerase family. Mg(2+) is required as a cofactor.

The catalysed reaction is (2R)-2,3-dihydroxy-3-methylbutanoate + NADP(+) = (2S)-2-acetolactate + NADPH + H(+). It carries out the reaction (2R,3R)-2,3-dihydroxy-3-methylpentanoate + NADP(+) = (S)-2-ethyl-2-hydroxy-3-oxobutanoate + NADPH + H(+). It functions in the pathway amino-acid biosynthesis; L-isoleucine biosynthesis; L-isoleucine from 2-oxobutanoate: step 2/4. Its pathway is amino-acid biosynthesis; L-valine biosynthesis; L-valine from pyruvate: step 2/4. Its function is as follows. Involved in the biosynthesis of branched-chain amino acids (BCAA). Catalyzes an alkyl-migration followed by a ketol-acid reduction of (S)-2-acetolactate (S2AL) to yield (R)-2,3-dihydroxy-isovalerate. In the isomerase reaction, S2AL is rearranged via a Mg-dependent methyl migration to produce 3-hydroxy-3-methyl-2-ketobutyrate (HMKB). In the reductase reaction, this 2-ketoacid undergoes a metal-dependent reduction by NADPH to yield (R)-2,3-dihydroxy-isovalerate. The sequence is that of Ketol-acid reductoisomerase (NADP(+)) from Hyphomonas neptunium (strain ATCC 15444).